Reading from the N-terminus, the 241-residue chain is 2-C-methyl-D-erythritol 4-phosphate cytidylyltransferase (241 aa).

The protein belongs to the IspD/TarI cytidylyltransferase family. IspD subfamily. In terms of assembly, homodimer.

It catalyses the reaction 2-C-methyl-D-erythritol 4-phosphate + CTP + H(+) = 4-CDP-2-C-methyl-D-erythritol + diphosphate. The protein operates within isoprenoid biosynthesis; isopentenyl diphosphate biosynthesis via DXP pathway; isopentenyl diphosphate from 1-deoxy-D-xylulose 5-phosphate: step 2/6. Catalyzes the formation of 4-diphosphocytidyl-2-C-methyl-D-erythritol from CTP and 2-C-methyl-D-erythritol 4-phosphate (MEP). The sequence is that of 2-C-methyl-D-erythritol 4-phosphate cytidylyltransferase from Yersinia pestis.